The primary structure comprises 391 residues: Ferrochelatase (391 aa).

2 residues coordinate Fe cation: His-196 and Glu-281.

Belongs to the ferrochelatase family.

It is found in the cytoplasm. It carries out the reaction heme b + 2 H(+) = protoporphyrin IX + Fe(2+). It functions in the pathway porphyrin-containing compound metabolism; protoheme biosynthesis; protoheme from protoporphyrin-IX: step 1/1. In terms of biological role, catalyzes the ferrous insertion into protoporphyrin IX. This is Ferrochelatase from Prochlorococcus marinus (strain SARG / CCMP1375 / SS120).